The following is a 383-amino-acid chain: BRISC and BRCA1-A complex member 2 (383 aa).

N-acetylmethionine is present on methionine 1. Serine 2 carries the phosphoserine modification. UEV-like regions lie at residues 30-147 (DATN…TLLE) and 275-364 (IAAF…RAKA).

It belongs to the BABAM2 family. Component of the ARISC complex, at least composed of UIMC1/RAP80, ABRAXAS1, BRCC3/BRCC36, BABAM2 and BABAM1/NBA1. Component of the BRCA1-A complex, at least composed of BRCA1, BARD1, UIMC1/RAP80, ABRAXAS1, BRCC3/BRCC36, BABAM2 and BABAM1/NBA1. In the BRCA1-A complex, interacts directly with ABRAXAS1, BRCC3/BRCC36 and BABAM1/NBA1. Binds polyubiquitin. Component of the BRISC complex, at least composed of ABRAXAS2, BRCC3/BRCC36, BABAM2 and BABAM1/NBA1. Identified in a complex with SHMT2 and the other subunits of the BRISC complex. Component of the BRCA1/BRCA2 containing complex (BRCC), which also contains BRCA1, BRCA2, BARD1, BRCC3/BRCC36 and RAD51. BRCC is a ubiquitin E3 ligase complex that enhances cellular survival following DNA damage. May interact with FAS and TNFRSF1A. In terms of tissue distribution, expressed in all cell lines examined. Highly expressed in placenta.

The protein localises to the cytoplasm. It localises to the nucleus. Component of the BRCA1-A complex, a complex that specifically recognizes 'Lys-63'-linked ubiquitinated histones H2A and H2AX at DNA lesions sites, leading to target the BRCA1-BARD1 heterodimer to sites of DNA damage at double-strand breaks (DSBs). The BRCA1-A complex also possesses deubiquitinase activity that specifically removes 'Lys-63'-linked ubiquitin on histones H2A and H2AX. In the BRCA1-A complex, it acts as an adapter that bridges the interaction between BABAM1/NBA1 and the rest of the complex, thereby being required for the complex integrity and modulating the E3 ubiquitin ligase activity of the BRCA1-BARD1 heterodimer. Component of the BRISC complex, a multiprotein complex that specifically cleaves 'Lys-63'-linked ubiquitin in various substrates. Within the BRISC complex, acts as an adapter that bridges the interaction between BABAM1/NBA1 and the rest of the complex, thereby being required for the complex integrity. The BRISC complex is required for normal mitotic spindle assembly and microtubule attachment to kinetochores via its role in deubiquitinating NUMA1. The BRISC complex plays a role in interferon signaling via its role in the deubiquitination of the interferon receptor IFNAR1; deubiquitination increases IFNAR1 activity by enhancing its stability and cell surface expression. Down-regulates the response to bacterial lipopolysaccharide (LPS) via its role in IFNAR1 deubiquitination. May play a role in homeostasis or cellular differentiation in cells of neural, epithelial and germline origins. May also act as a death receptor-associated anti-apoptotic protein, which inhibits the mitochondrial apoptotic pathway. May regulate TNF-alpha signaling through its interactions with TNFRSF1A; however these effects may be indirect. This Homo sapiens (Human) protein is BRISC and BRCA1-A complex member 2.